The sequence spans 125 residues: Small ribosomal subunit protein bS6 (125 aa).

The tract at residues 99 to 125 (ASPMVKAKDERRASAEVENNDFEDAEE) is disordered. The segment covering 104-113 (KAKDERRASA) has biased composition (basic and acidic residues). The segment covering 116-125 (ENNDFEDAEE) has biased composition (acidic residues).

Belongs to the bacterial ribosomal protein bS6 family.

In terms of biological role, binds together with bS18 to 16S ribosomal RNA. This chain is Small ribosomal subunit protein bS6, found in Mannheimia succiniciproducens (strain KCTC 0769BP / MBEL55E).